Here is a 252-residue protein sequence, read N- to C-terminus: 3-dehydroquinate dehydratase (252 aa).

Residues S21, 46-48 (EWR), and R82 contribute to the 3-dehydroquinate site. H143 acts as the Proton donor/acceptor in catalysis. K170 functions as the Schiff-base intermediate with substrate in the catalytic mechanism. 3-dehydroquinate-binding residues include R213, S232, and Q236.

It belongs to the type-I 3-dehydroquinase family. Homodimer.

The catalysed reaction is 3-dehydroquinate = 3-dehydroshikimate + H2O. The protein operates within metabolic intermediate biosynthesis; chorismate biosynthesis; chorismate from D-erythrose 4-phosphate and phosphoenolpyruvate: step 3/7. Functionally, involved in the third step of the chorismate pathway, which leads to the biosynthesis of aromatic amino acids. Catalyzes the cis-dehydration of 3-dehydroquinate (DHQ) and introduces the first double bond of the aromatic ring to yield 3-dehydroshikimate. This Salmonella dublin (strain CT_02021853) protein is 3-dehydroquinate dehydratase.